A 505-amino-acid polypeptide reads, in one-letter code: Maturase K (505 aa).

Belongs to the intron maturase 2 family. MatK subfamily.

The protein localises to the plastid. It localises to the chloroplast. In terms of biological role, usually encoded in the trnK tRNA gene intron. Probably assists in splicing its own and other chloroplast group II introns. The protein is Maturase K of Morus alba (White mulberry).